The primary structure comprises 249 residues: Type I iodothyronine deiodinase (249 aa).

Residues methionine 1–arginine 12 lie on the Extracellular side of the membrane. A helical; Signal-anchor for type III membrane protein transmembrane segment spans residues leucine 13–phenylalanine 33. Over proline 34 to serine 249 the chain is Cytoplasmic. The active site involves selenocysteine 126. Position 126 (selenocysteine 126) is a non-standard amino acid, selenocysteine.

This sequence belongs to the iodothyronine deiodinase family. In terms of assembly, predominantly monomer. Can form homodimers but homodimerization is not essential for enzyme activity.

The protein resides in the cell membrane. Its subcellular location is the endoplasmic reticulum membrane. The protein localises to the basolateral cell membrane. The catalysed reaction is 3,3',5-triiodo-L-thyronine + iodide + A + H(+) = L-thyroxine + AH2. It carries out the reaction 3,3',5'-triiodo-L-thyronine + iodide + A + H(+) = L-thyroxine + AH2. It catalyses the reaction 3,3'-diiodo-L-thyronine + iodide + A + H(+) = 3,3',5'-triiodo-L-thyronine + AH2. The enzyme catalyses 3,3'-diiodo-L-thyronine + iodide + A + H(+) = 3,3',5-triiodo-L-thyronine + AH2. The catalysed reaction is 3'-iodo-L-thyronine + iodide + A + H(+) = 3',5'-diiodo-L-thyronine + AH2. It carries out the reaction 3-iodo-L-thyronine + iodide + A + H(+) = 3,5-diiodo-L-thyronine + AH2. It catalyses the reaction 3-iodo-L-thyronine + iodide + A + H(+) = 3,3'-diiodo-L-thyronine + AH2. The enzyme catalyses 3,3'-diiodothyronamine + iodide + A + H(+) = 3,3',5'-triiodothyronamine + AH2. The catalysed reaction is 3'-iodothyronamine + iodide + A + H(+) = 3',5'-diiodothyronamine + AH2. It carries out the reaction 3-iodothyronamine + iodide + A + H(+) = 3,3'-diiodothyronamine + AH2. It catalyses the reaction 3,3'-diiodothyronamine + iodide + A + H(+) = 3,3',5-triiodothyronamine + AH2. The enzyme catalyses 3-iodothyronamine + iodide + A + H(+) = 3,5-diiodothyronamine + AH2. The catalysed reaction is 3,3'-diiodo-L-thyronine sulfate + iodide + A + H(+) = 3,3',5'-triiodo-L-thyronine sulfate + AH2. It carries out the reaction 3,3',5'-triiodo-L-thyronine sulfate + iodide + A + H(+) = L-thyroxine sulfate + AH2. It catalyses the reaction 3,3'-diiodo-L-thyronine sulfate + iodide + A + H(+) = 3,3',5-triiodo-L-thyronine sulfate + AH2. Its function is as follows. Plays a crucial role in the metabolism of thyroid hormones (TH) and has specific roles in TH activation and inactivation by deiodination. Catalyzes the deiodination of L-thyroxine (T4) to 3,5,3'-triiodothyronine (T3) and 3,3',5'-triiodothyronine (rT3) to 3,3'-diiodothyronine (3,3'-T2) via outer-ring deiodination (ORD). Catalyzes the deiodination of T4 to rT3, T3 to 3,3'-T2, 3,5-diiodothyronine (3,5-T2) to 3-monoiodothyronine (3-T1) and 3,3'-T2 to 3-T1 via inner-ring deiodination (IRD). Catalyzes the deiodination of 3',5'-diiodothyronine (3',5'-T2) to 3'-monoiodothyronine (3'-T1) via ORD. Catalyzes the phenolic ring deiodinations of 3,3',5'-triiodothyronamine, 3',5'-diiodothyronamine and 3,3'-diiodothyronamine as well as tyrosyl ring deiodinations of 3,5,3'-triiodothyronamine and 3,5-diiodothyronamine. Catalyzes the deiodination of L-thyroxine sulfate and 3,3',5-triiodo-L-thyronine sulfate via IRD and of 3,3',5'-triiodo-L-thyronine sulfate via ORD. This chain is Type I iodothyronine deiodinase (DIO1), found in Sus scrofa (Pig).